The primary structure comprises 339 residues: GTPase Obg (339 aa).

The 159-residue stretch at 1 to 159 (MKFVDEAFVR…RELKLELKLL (159 aa)) folds into the Obg domain. The OBG-type G domain maps to 160–333 (ADVGLLGLPN…LCYDLMSFLE (174 aa)). GTP-binding positions include 166 to 173 (GLPNAGKS), 191 to 195 (FTTLY), 213 to 216 (DIPG), 283 to 286 (NKID), and 314 to 316 (SAI). Residues S173 and T193 each contribute to the Mg(2+) site.

It belongs to the TRAFAC class OBG-HflX-like GTPase superfamily. OBG GTPase family. As to quaternary structure, monomer. Mg(2+) serves as cofactor.

Its subcellular location is the cytoplasm. In terms of biological role, an essential GTPase which binds GTP, GDP and possibly (p)ppGpp with moderate affinity, with high nucleotide exchange rates and a fairly low GTP hydrolysis rate. Plays a role in control of the cell cycle, stress response, ribosome biogenesis and in those bacteria that undergo differentiation, in morphogenesis control. This chain is GTPase Obg, found in Coxiella burnetii (strain RSA 331 / Henzerling II).